The sequence spans 372 residues: Heat-inducible transcription repressor HrcA (372 aa).

It belongs to the HrcA family.

Negative regulator of class I heat shock genes (grpE-dnaK-dnaJ and groELS operons). Prevents heat-shock induction of these operons. The protein is Heat-inducible transcription repressor HrcA of Chloroflexus aurantiacus (strain ATCC 29366 / DSM 635 / J-10-fl).